The chain runs to 328 residues: Putative HTH-type transcriptional regulatory protein MA_3524 (328 aa).

The HTH cro/C1-type domain occupies 132–190 (LKKARTDQSMSLGTLASMVGVSRRTISKYEEEGMDASIDVVLQLEDIFGVELARPIDIL). A DNA-binding region (H-T-H motif) is located at residues 143–162 (LGTLASMVGVSRRTISKYEE).

The protein is Putative HTH-type transcriptional regulatory protein MA_3524 of Methanosarcina acetivorans (strain ATCC 35395 / DSM 2834 / JCM 12185 / C2A).